The chain runs to 324 residues: Beta-ketoacyl-[acyl-carrier-protein] synthase III (324 aa).

Catalysis depends on residues C114 and H246. Residues 247 to 251 (QANLR) form an ACP-binding region. Residue N276 is part of the active site.

Belongs to the thiolase-like superfamily. FabH family. Homodimer.

The protein localises to the cytoplasm. The catalysed reaction is malonyl-[ACP] + acetyl-CoA + H(+) = 3-oxobutanoyl-[ACP] + CO2 + CoA. It functions in the pathway lipid metabolism; fatty acid biosynthesis. Catalyzes the condensation reaction of fatty acid synthesis by the addition to an acyl acceptor of two carbons from malonyl-ACP. Catalyzes the first condensation reaction which initiates fatty acid synthesis and may therefore play a role in governing the total rate of fatty acid production. Possesses both acetoacetyl-ACP synthase and acetyl transacylase activities. Its substrate specificity determines the biosynthesis of branched-chain and/or straight-chain of fatty acids. The protein is Beta-ketoacyl-[acyl-carrier-protein] synthase III of Campylobacter jejuni subsp. jejuni serotype O:6 (strain 81116 / NCTC 11828).